The sequence spans 100 residues: Ubiquitin-related modifier 1 (100 aa).

A 1-thioglycine modification is found at Gly100. A Glycyl lysine isopeptide (Gly-Lys) (interchain with K-? in acceptor proteins) cross-link involves residue Gly100.

This sequence belongs to the URM1 family. In terms of processing, C-terminal thiocarboxylation occurs in 2 steps, it is first acyl-adenylated (-COAMP) via the hesA/moeB/thiF part of UBA4, then thiocarboxylated (-COSH) via the rhodanese domain of UBA4.

Its subcellular location is the cytoplasm. It participates in tRNA modification; 5-methoxycarbonylmethyl-2-thiouridine-tRNA biosynthesis. Functionally, acts as a sulfur carrier required for 2-thiolation of mcm(5)S(2)U at tRNA wobble positions of cytosolic tRNA(Lys), tRNA(Glu) and tRNA(Gln). Serves as sulfur donor in tRNA 2-thiolation reaction by being thiocarboxylated (-COSH) at its C-terminus by the MOCS3 homolog UBA4. The sulfur is then transferred to tRNA to form 2-thiolation of mcm(5)S(2)U. Prior mcm(5) tRNA modification by the elongator complex is required for 2-thiolation. Also acts as a ubiquitin-like protein (UBL) that is covalently conjugated via an isopeptide bond to lysine residues of target proteins such as AHP1. The thiocarboxylated form serves as substrate for conjugation and oxidative stress specifically induces the formation of UBL-protein conjugates. In Eremothecium gossypii (strain ATCC 10895 / CBS 109.51 / FGSC 9923 / NRRL Y-1056) (Yeast), this protein is Ubiquitin-related modifier 1.